The following is a 330-amino-acid chain: Aspartate--ammonia ligase (330 aa).

This sequence belongs to the class-II aminoacyl-tRNA synthetase family. AsnA subfamily.

It localises to the cytoplasm. It carries out the reaction L-aspartate + NH4(+) + ATP = L-asparagine + AMP + diphosphate + H(+). The protein operates within amino-acid biosynthesis; L-asparagine biosynthesis; L-asparagine from L-aspartate (ammonia route): step 1/1. The chain is Aspartate--ammonia ligase from Escherichia coli O127:H6 (strain E2348/69 / EPEC).